A 204-amino-acid chain; its full sequence is MAGSRRKSPGITPDILLRAYSIGLFPMAESADDPEIFWVEPELRGVLPFDHFHVSKSLAKTVRKKPFEIRFDHAFDQVIAACAEETSGRPSTWINRTIRSLYSTLFDMGHAHTVEAWEGNELVGGLYGVSLGSAFFGESMFSRRTDASKICLVHLVDRLRERGFTLLDTQFTTEHLKTFGAIDVPKADYAAMLTAAMESPHLKF.

Belongs to the L/F-transferase family.

It is found in the cytoplasm. The enzyme catalyses N-terminal L-lysyl-[protein] + L-leucyl-tRNA(Leu) = N-terminal L-leucyl-L-lysyl-[protein] + tRNA(Leu) + H(+). It catalyses the reaction N-terminal L-arginyl-[protein] + L-leucyl-tRNA(Leu) = N-terminal L-leucyl-L-arginyl-[protein] + tRNA(Leu) + H(+). The catalysed reaction is L-phenylalanyl-tRNA(Phe) + an N-terminal L-alpha-aminoacyl-[protein] = an N-terminal L-phenylalanyl-L-alpha-aminoacyl-[protein] + tRNA(Phe). In terms of biological role, functions in the N-end rule pathway of protein degradation where it conjugates Leu, Phe and, less efficiently, Met from aminoacyl-tRNAs to the N-termini of proteins containing an N-terminal arginine or lysine. The protein is Leucyl/phenylalanyl-tRNA--protein transferase of Rhizobium johnstonii (strain DSM 114642 / LMG 32736 / 3841) (Rhizobium leguminosarum bv. viciae).